The primary structure comprises 454 residues: Keratin, type I cuticular Ha5 (454 aa).

Positions 1 to 97 (MASKCLKASF…FGEGILTGNE (97 aa)) are head. The 311-residue stretch at 97 to 407 (EKETMQFLND…GLLDSEDCKL (311 aa)) folds into the IF rod domain. Positions 98-125 (KETMQFLNDRLASYLEKCGSWSGRTRSW) are coil 1A. The interval 134 to 142 (SNSALPVPD) is linker 1. Residues 143-243 (YQSYFQTIEE…HEEEVNSLRC (101 aa)) form a coil 1B region. The interval 244–259 (QLGDRLNVEVDAAPPV) is linker 12. The interval 260-403 (DLNRVLNEMR…NTYRGLLDSE (144 aa)) is coil 2. A tail region spans residues 404 to 454 (DCKLPCNPCAPDHSPSKSCLPCLPAASCGPGMARTTCSPRPICVPCPGSRF).

This sequence belongs to the intermediate filament family.

The sequence is that of Keratin, type I cuticular Ha5 from Bos taurus (Bovine).